Here is a 330-residue protein sequence, read N- to C-terminus: uncharacterized protein (330 aa).

To H.influenzae HI_0461.

This is an uncharacterized protein from Escherichia coli (strain K12).